The primary structure comprises 457 residues: Argininosuccinate lyase (457 aa).

It belongs to the lyase 1 family. Argininosuccinate lyase subfamily.

It is found in the cytoplasm. The catalysed reaction is 2-(N(omega)-L-arginino)succinate = fumarate + L-arginine. It functions in the pathway amino-acid biosynthesis; L-arginine biosynthesis; L-arginine from L-ornithine and carbamoyl phosphate: step 3/3. This is Argininosuccinate lyase from Erwinia tasmaniensis (strain DSM 17950 / CFBP 7177 / CIP 109463 / NCPPB 4357 / Et1/99).